Consider the following 225-residue polypeptide: Ribose-5-phosphate isomerase A (225 aa).

Substrate-binding positions include 26-29, 82-85, and 95-98; these read TGST, DGAD, and KGGG. Glutamate 104 (proton acceptor) is an active-site residue. Lysine 122 provides a ligand contact to substrate.

The protein belongs to the ribose 5-phosphate isomerase family. Homodimer.

It carries out the reaction aldehydo-D-ribose 5-phosphate = D-ribulose 5-phosphate. Its pathway is carbohydrate degradation; pentose phosphate pathway; D-ribose 5-phosphate from D-ribulose 5-phosphate (non-oxidative stage): step 1/1. Catalyzes the reversible conversion of ribose-5-phosphate to ribulose 5-phosphate. The sequence is that of Ribose-5-phosphate isomerase A from Streptococcus gordonii (strain Challis / ATCC 35105 / BCRC 15272 / CH1 / DL1 / V288).